The sequence spans 553 residues: Effector protein HopAB2 (553 aa).

Disordered stretches follow at residues Met-1–Arg-123, Ala-198–Gln-227, and Ala-239–Arg-275. The segment at Met-1 to Met-308 is host recognition; Pto interaction. Residues Ser-24–Ser-39 show a composition bias toward low complexity. Pro residues predominate over residues Ser-47 to Thr-60. Residues Ser-217–Gln-227 show a composition bias toward low complexity. The span at Gln-242–Val-255 shows a compositional bias: polar residues. The tract at residues Gln-309–Pro-553 is E3 ubiquitin-protein ligase. Positions Gly-325–Pro-328 match the Interaction with Pto-kinase motif. The tract at residues Ala-361–Thr-380 is disordered. Residues Lys-512–Lys-529 are required for E3 ubiquitin-protein ligase and anti-PCD activities and pathogenesis.

Belongs to the HopAB family. In terms of assembly, interacts physically with plant cell Pto. In terms of processing, auto-ubiquitinated.

The protein resides in the secreted. Functionally, effector protein involved in gene-for-gene resistance in tomato plants. It is recognized by the host Pto resistance protein and elicits Pto and Prf-dependent hypersensitive response (HR) and programmed cell death (PCD), resulting in host immunity. In susceptible plants, acts as a virulence factor by suppressing PCD and HR-based plant immunity. This function requires its E3 ubiquitin ligase activity probably by recruiting E2 enzymes and transferring ubiquitin molecules to cellular proteins involved in regulation of PCD and targeting them for degradation. Also, induces expression of host genes involved in ethylene biosynthesis and signaling, in particular ACO1 and ACO2, encoding the ethylene-forming enzyme ACC oxidase. The protein is Effector protein HopAB2 (hopAB2) of Pseudomonas syringae pv. tomato (strain ATCC BAA-871 / DC3000).